Reading from the N-terminus, the 326-residue chain is Melanocortin receptor 4 (326 aa).

The span at 1-14 shows a compositional bias: basic residues; that stretch reads MNTSHHHGLHHSFR. The interval 1–31 is disordered; that stretch reads MNTSHHHGLHHSFRNHSQGALPVGKPSHGDR. Over 1 to 46 the chain is Extracellular; it reads MNTSHHHGLHHSFRNHSQGALPVGKPSHGDRGSASGCYEQLLISTE. 2 N-linked (GlcNAc...) asparagine glycosylation sites follow: N2 and N15. The chain crosses the membrane as a helical span at residues 47-67; it reads IFLTLGLVSLLENILVIAAIV. Topologically, residues 68 to 71 are cytoplasmic; sequence KNKN. Residues 72–92 form a helical membrane-spanning segment; sequence LHSPMYFFICSLAVADLLVSV. Residues 93–121 are Extracellular-facing; it reads SNASETVVMALITGGNLTNRESIIKNMDN. 2 N-linked (GlcNAc...) asparagine glycosylation sites follow: N94 and N108. The helical transmembrane segment at 122 to 142 threads the bilayer; it reads VFDSMICSSLLASIWSLLAIA. The Cytoplasmic segment spans residues 143–163; the sequence is VDRYITIFYALRYHNIMTQRR. The chain crosses the membrane as a helical span at residues 164–184; it reads AGTIITCIWTFCTVSGVLFIV. Residues 185 to 190 lie on the Extracellular side of the membrane; sequence YSESTT. A helical membrane pass occupies residues 191–211; that stretch reads VLICLISMFFTMLALMASLYV. Topologically, residues 212-246 are cytoplasmic; the sequence is HMFLLARLHMKRIAALPGNGPIWQAANMKGAITIT. Residues 247-267 form a helical membrane-spanning segment; the sequence is ILLGVFVVCWAPFFLHLILMI. Residues 268-281 lie on the Extracellular side of the membrane; it reads SCPRNPYCVCFMSH. A helical transmembrane segment spans residues 282-302; the sequence is FNMYLILIMCNSVIDPLIYAF. Topologically, residues 303-326 are cytoplasmic; that stretch reads RSQEMRKTFKEICCCWYGLASLCV. C316 is lipidated: S-palmitoyl cysteine.

The protein belongs to the G-protein coupled receptor 1 family. As to quaternary structure, homodimer; disulfide-linked, also forms higher order oligomers. Interacts with mrap2a; decreasing ligand-sensitivity. Interacts with mrap2b; increasing ligand-sensitivity and generation of cAMP.

The protein resides in the cell membrane. Functionally, receptor specific to the heptapeptide core common to adrenocorticotropic hormone and alpha-, beta-, and gamma-MSH. Plays a central role in energy homeostasis and somatic growth. This receptor is mediated by G proteins that stimulate adenylate cyclase (cAMP). The polypeptide is Melanocortin receptor 4 (mc4r) (Danio rerio (Zebrafish)).